The sequence spans 953 residues: Zinc finger protein 618 (953 aa).

An N-acetylmethionine modification is found at methionine 1. A disordered region spans residues 1–56 (MSQPDGAAAPQVDGASAPGRKSAVNRERLKRSQKSSKVEGPEPVPAEASLSAEQGT). Glycyl lysine isopeptide (Lys-Gly) (interchain with G-Cter in SUMO2) cross-links involve residues lysine 63 and lysine 81. 2 consecutive C2H2-type zinc fingers follow at residues 146–168 (YECG…VRAH) and 187–209 (YTCD…RDLH). Residue lysine 238 forms a Glycyl lysine isopeptide (Lys-Gly) (interchain with G-Cter in SUMO2) linkage. The C2H2-type 3 zinc finger occupies 255–277 (YTCEFCGKQYKYYTPYQEHVALH). 2 disordered regions span residues 283–305 (APGW…EVTP) and 337–390 (TPPA…SSEP). A compositionally biased stretch (polar residues) spans 339-354 (PATQTQTFRAPNSGSP). Residues 365–379 (FSRRVESKAQNHFEE) show a composition bias toward basic and acidic residues. The C2H2-type 4 zinc finger occupies 391–413 (YTCGACGIQFQFYSNLLEHMQSH). A compositionally biased stretch (polar residues) spans 419–428 (NNITSNQSRS). The disordered stretch occupies residues 419-461 (NNITSNQSRSPPAAVEEKWKPQAQRNSANNTTTSGLTPNSVIP). Lysine 436 participates in a covalent cross-link: Glycyl lysine isopeptide (Lys-Gly) (interchain with G-Cter in SUMO2). Polar residues predominate over residues 441-458 (AQRNSANNTTTSGLTPNS).

The protein belongs to the krueppel C2H2-type zinc-finger protein family. In terms of assembly, interacts with UHRF2.

It localises to the nucleus. It is found in the chromosome. Regulates UHRF2 function as a specific 5-hydroxymethylcytosine (5hmC) reader by regulating its chromatin localization. The polypeptide is Zinc finger protein 618 (Znf618) (Mus musculus (Mouse)).